Consider the following 163-residue polypeptide: NADH-quinone oxidoreductase subunit I (163 aa).

2 4Fe-4S ferredoxin-type domains span residues 54–84 (LRRY…IESE) and 94–123 (TRYD…ETRI). [4Fe-4S] cluster is bound by residues Cys64, Cys67, Cys70, Cys74, Cys103, Cys106, Cys109, and Cys113.

This sequence belongs to the complex I 23 kDa subunit family. As to quaternary structure, NDH-1 is composed of 14 different subunits. Subunits NuoA, H, J, K, L, M, N constitute the membrane sector of the complex. Requires [4Fe-4S] cluster as cofactor.

Its subcellular location is the cell inner membrane. It catalyses the reaction a quinone + NADH + 5 H(+)(in) = a quinol + NAD(+) + 4 H(+)(out). Its function is as follows. NDH-1 shuttles electrons from NADH, via FMN and iron-sulfur (Fe-S) centers, to quinones in the respiratory chain. The immediate electron acceptor for the enzyme in this species is believed to be ubiquinone. Couples the redox reaction to proton translocation (for every two electrons transferred, four hydrogen ions are translocated across the cytoplasmic membrane), and thus conserves the redox energy in a proton gradient. The polypeptide is NADH-quinone oxidoreductase subunit I (Methylobacillus flagellatus (strain ATCC 51484 / DSM 6875 / VKM B-1610 / KT)).